Here is a 241-residue protein sequence, read N- to C-terminus: Proteasome subunit alpha type-5 (241 aa).

Residue methionine 1 is modified to N-acetylmethionine. Serine 16 bears the Phosphoserine mark. Position 55 is a phosphothreonine (threonine 55). Phosphoserine occurs at positions 56 and 63. The O-linked (GlcNAc) serine glycan is linked to serine 198.

Belongs to the peptidase T1A family. The 26S proteasome consists of a 20S proteasome core and two 19S regulatory subunits. The 20S proteasome core is a barrel-shaped complex made of 28 subunits that are arranged in four stacked rings. The two outer rings are each formed by seven alpha subunits, and the two inner rings are formed by seven beta subunits. The proteolytic activity is exerted by three beta-subunits PSMB5, PSMB6 and PSMB7. PSMA5 interacts directly with the PSMG1-PSMG2 heterodimer which promotes 20S proteasome assembly.

The protein localises to the cytoplasm. It localises to the nucleus. Its function is as follows. Component of the 20S core proteasome complex involved in the proteolytic degradation of most intracellular proteins. This complex plays numerous essential roles within the cell by associating with different regulatory particles. Associated with two 19S regulatory particles, forms the 26S proteasome and thus participates in the ATP-dependent degradation of ubiquitinated proteins. The 26S proteasome plays a key role in the maintenance of protein homeostasis by removing misfolded or damaged proteins that could impair cellular functions, and by removing proteins whose functions are no longer required. Associated with the PA200 or PA28, the 20S proteasome mediates ubiquitin-independent protein degradation. This type of proteolysis is required in several pathways including spermatogenesis (20S-PA200 complex) or generation of a subset of MHC class I-presented antigenic peptides (20S-PA28 complex). The polypeptide is Proteasome subunit alpha type-5 (PSMA5) (Bos taurus (Bovine)).